The chain runs to 760 residues: Xaa-Pro dipeptidyl-peptidase (760 aa).

Active-site charge relay system residues include Ser349, Asp469, and His499.

Belongs to the peptidase S15 family. As to quaternary structure, homodimer.

Its subcellular location is the cytoplasm. It catalyses the reaction Hydrolyzes Xaa-Pro-|- bonds to release unblocked, N-terminal dipeptides from substrates including Ala-Pro-|-p-nitroanilide and (sequentially) Tyr-Pro-|-Phe-Pro-|-Gly-Pro-|-Ile.. Removes N-terminal dipeptides sequentially from polypeptides having unsubstituted N-termini provided that the penultimate residue is proline. The polypeptide is Xaa-Pro dipeptidyl-peptidase (Streptococcus pyogenes serotype M5 (strain Manfredo)).